A 104-amino-acid chain; its full sequence is Putative arsenate reductase (104 aa).

Residue cysteine 12 is part of the active site.

Belongs to the ArsC family.

The catalysed reaction is [glutaredoxin]-dithiol + arsenate + glutathione + H(+) = glutathionyl-S-S-[glutaredoxin] + arsenite + H2O. In terms of biological role, reduction of arsenate [As(V)] to arsenite [As(III)]. This protein expands the substrate specificity of ArsAB pump which can extrude arsenite and antimonite to allow for arsenate pumping and resistance. In Escherichia coli (strain K12), this protein is Putative arsenate reductase (yfjU).